A 133-amino-acid polypeptide reads, in one-letter code: Agouti-signaling protein (133 aa).

The first 22 residues, 1–22 (MDVSRLLLATLLVCLCFLTAYS), serve as a signal peptide directing secretion. An N-linked (GlcNAc...) asparagine glycan is attached at Asn39. The interval 56 to 95 (NKKSKKISRNEAEKKKRPSKRKAPMKNVARTRPPPPTPCV) is disordered. Residues 70 to 79 (KKRPSKRKAP) show a composition bias toward basic residues. Intrachain disulfides connect Cys94-Cys109, Cys101-Cys115, Cys108-Cys126, Cys112-Cys133, and Cys117-Cys124. The region spanning 94–133 (CVATRDSCKPPAPACCDPCAFCQCRFFRSACSCRVLNPTC) is the Agouti domain.

It is found in the secreted. Its function is as follows. Involved in the regulation of melanogenesis. The binding of ASP to MC1R precludes alpha-MSH initiated signaling and thus blocks production of cAMP, leading to a down-regulation of eumelanogenesis (brown/black pigment) and thus increasing synthesis of pheomelanin (yellow/red pigment). This chain is Agouti-signaling protein (ASIP), found in Bos taurus (Bovine).